The following is a 193-amino-acid chain: Pyridoxal 5'-phosphate synthase subunit PdxT (193 aa).

50–52 (GES) contacts L-glutamine. Catalysis depends on cysteine 82, which acts as the Nucleophile. Residues arginine 109 and 136 to 137 (IR) contribute to the L-glutamine site. Catalysis depends on charge relay system residues histidine 172 and glutamate 174.

Belongs to the glutaminase PdxT/SNO family. In the presence of PdxS, forms a dodecamer of heterodimers. Only shows activity in the heterodimer.

It carries out the reaction aldehydo-D-ribose 5-phosphate + D-glyceraldehyde 3-phosphate + L-glutamine = pyridoxal 5'-phosphate + L-glutamate + phosphate + 3 H2O + H(+). The catalysed reaction is L-glutamine + H2O = L-glutamate + NH4(+). It functions in the pathway cofactor biosynthesis; pyridoxal 5'-phosphate biosynthesis. Catalyzes the hydrolysis of glutamine to glutamate and ammonia as part of the biosynthesis of pyridoxal 5'-phosphate. The resulting ammonia molecule is channeled to the active site of PdxS. The sequence is that of Pyridoxal 5'-phosphate synthase subunit PdxT from Streptococcus pneumoniae serotype 19F (strain G54).